The primary structure comprises 92 residues: Isoleucine--tRNA ligase (92 aa).

Zn(2+) is bound by residues C55, C58, C75, and C78.

Belongs to the class-I aminoacyl-tRNA synthetase family. IleS type 1 subfamily. In terms of assembly, monomer. The cofactor is Zn(2+).

It is found in the cytoplasm. It catalyses the reaction tRNA(Ile) + L-isoleucine + ATP = L-isoleucyl-tRNA(Ile) + AMP + diphosphate. Catalyzes the attachment of isoleucine to tRNA(Ile). As IleRS can inadvertently accommodate and process structurally similar amino acids such as valine, to avoid such errors it has two additional distinct tRNA(Ile)-dependent editing activities. One activity is designated as 'pretransfer' editing and involves the hydrolysis of activated Val-AMP. The other activity is designated 'posttransfer' editing and involves deacylation of mischarged Val-tRNA(Ile). The protein is Isoleucine--tRNA ligase (ileS) of Klebsiella aerogenes (Enterobacter aerogenes).